Consider the following 746-residue polypeptide: Methyl-CpG-binding domain-containing protein 13 (746 aa).

2 short sequence motifs (nuclear localization signal) span residues 13 to 20 (ERKVEIRV) and 44 to 51 (IKKLEITN). In terms of domain architecture, MBD spans 29–104 (VIVEKSAAQG…KESDIEDDDS (76 aa)). 6 disordered regions span residues 131–157 (IDDVRRSKRRNLSSSDEHSKNCKMTSD), 169–283 (LGKK…PTPE), 295–328 (PLDDEPTPELKTRTKVQRVVPPDDEPTPELKTRT), 348–479 (TKVQ…LKSP), 518–562 (TAAG…SGSA), and 696–746 (EPDT…FSKD). The span at 169–180 (LGKKEEVKDPIE) shows a compositional bias: basic and acidic residues. Positions 190–199 (RSQTKASTTE) are enriched in polar residues. The span at 244–260 (SSEKRITRSKVEEKKNE) shows a compositional bias: basic and acidic residues. The Nuclear localization signal motif lies at 256–263 (EKKNELSN). Over residues 427 to 451 (VAQSCNEQSSQKPHAAAATSNNRVS) the composition is skewed to polar residues. Residues 465-476 (VGRKPSKDKKTL) show a composition bias toward basic residues. Polar residues-rich tracts occupy residues 529 to 546 (PKANLTTSVKPTQISPLR) and 702 to 730 (KSQGMTSTTAATQEAKGRQNNCDYMTNKT). Residues 732–746 (GKPDDLRFTQSFSKD) are compositionally biased toward basic and acidic residues.

The protein resides in the nucleus. Probable transcriptional regulator. In Arabidopsis thaliana (Mouse-ear cress), this protein is Methyl-CpG-binding domain-containing protein 13 (MBD13).